A 349-amino-acid polypeptide reads, in one-letter code: S-adenosylmethionine:tRNA ribosyltransferase-isomerase (349 aa).

It belongs to the QueA family. Monomer.

The protein localises to the cytoplasm. It catalyses the reaction 7-aminomethyl-7-carbaguanosine(34) in tRNA + S-adenosyl-L-methionine = epoxyqueuosine(34) in tRNA + adenine + L-methionine + 2 H(+). The protein operates within tRNA modification; tRNA-queuosine biosynthesis. Transfers and isomerizes the ribose moiety from AdoMet to the 7-aminomethyl group of 7-deazaguanine (preQ1-tRNA) to give epoxyqueuosine (oQ-tRNA). The polypeptide is S-adenosylmethionine:tRNA ribosyltransferase-isomerase (Flavobacterium psychrophilum (strain ATCC 49511 / DSM 21280 / CIP 103535 / JIP02/86)).